Reading from the N-terminus, the 103-residue chain is Small ribosomal subunit protein uS10 (103 aa).

Belongs to the universal ribosomal protein uS10 family. Part of the 30S ribosomal subunit.

Functionally, involved in the binding of tRNA to the ribosomes. The sequence is that of Small ribosomal subunit protein uS10 from Bordetella avium (strain 197N).